We begin with the raw amino-acid sequence, 1433 residues long: DNA-directed RNA polymerase subunit beta' (1433 aa).

Zn(2+)-binding residues include Cys-60, Cys-62, Cys-75, and Cys-78. The Mg(2+) site is built by Asp-449, Asp-451, and Asp-453. Zn(2+)-binding residues include Cys-777, Cys-851, Cys-858, and Cys-861. Acidic residues-rich tracts occupy residues Asp-1383–Glu-1393 and Glu-1411–Asp-1433. Residues Asp-1383–Asp-1433 form a disordered region.

It belongs to the RNA polymerase beta' chain family. As to quaternary structure, the RNAP catalytic core consists of 2 alpha, 1 beta, 1 beta' and 1 omega subunit. When a sigma factor is associated with the core the holoenzyme is formed, which can initiate transcription. The cofactor is Mg(2+). Zn(2+) is required as a cofactor.

It catalyses the reaction RNA(n) + a ribonucleoside 5'-triphosphate = RNA(n+1) + diphosphate. In terms of biological role, DNA-dependent RNA polymerase catalyzes the transcription of DNA into RNA using the four ribonucleoside triphosphates as substrates. The protein is DNA-directed RNA polymerase subunit beta' of Leptospira biflexa serovar Patoc (strain Patoc 1 / Ames).